The following is a 456-amino-acid chain: RuvB-like helicase 1 (456 aa).

71–78 (GGAGTGKT) lines the ATP pocket.

The protein belongs to the RuvB family. As to quaternary structure, may form heterododecamers with RVB2. Component of the SWR1 chromatin remodeling complex, the INO80 chromatin remodeling complex, and of the R2TP complex.

It localises to the nucleus. It catalyses the reaction ATP + H2O = ADP + phosphate + H(+). In terms of biological role, DNA helicase which participates in several chromatin remodeling complexes, including the SWR1 and the INO80 complexes. The SWR1 complex mediates the ATP-dependent exchange of histone H2A for the H2A variant HZT1 leading to transcriptional regulation of selected genes by chromatin remodeling. The INO80 complex remodels chromatin by shifting nucleosomes and is involved in DNA repair. Also involved in pre-rRNA processing. This chain is RuvB-like helicase 1 (rvb1), found in Schizosaccharomyces pombe (strain 972 / ATCC 24843) (Fission yeast).